The primary structure comprises 404 residues: Alpha-galactosidase A (404 aa).

Residues 1 to 23 (MRKQLLLGLGLVSALLVSVQASA) form the signal peptide. Disulfide bonds link cysteine 45-cysteine 77 and cysteine 124-cysteine 154. Aspartate 152 serves as the catalytic Nucleophile. 185–189 (EWGDN) contacts substrate. Residue aspartate 207 is the Proton donor of the active site.

The protein belongs to the glycosyl hydrolase 27 family.

The enzyme catalyses Hydrolysis of terminal, non-reducing alpha-D-galactose residues in alpha-D-galactosides, including galactose oligosaccharides, galactomannans and galactolipids.. Hydrolyzes galactomannan found in plant cell wall, by cleaving alpha-1,6-D-galactose side-chains from the mannan backbone. Appears to act in synergy with mannanase (ManA) to elicit hydrolysis of galactomannan. Has greater activity against galactomannans with decreased degree of polymerisation values. To a lesser extent, is also able to degrade other galactosides containing alpha-1,6-linked D-galactose, such as melibiose and stachyose. This chain is Alpha-galactosidase A (agaA), found in Cellvibrio japonicus (strain Ueda107) (Pseudomonas fluorescens subsp. cellulosa).